Consider the following 145-residue polypeptide: 3-hydroxyacyl-[acyl-carrier-protein] dehydratase FabZ (145 aa).

His-49 is a catalytic residue.

Belongs to the thioester dehydratase family. FabZ subfamily.

Its subcellular location is the cytoplasm. The catalysed reaction is a (3R)-hydroxyacyl-[ACP] = a (2E)-enoyl-[ACP] + H2O. In terms of biological role, involved in unsaturated fatty acids biosynthesis. Catalyzes the dehydration of short chain beta-hydroxyacyl-ACPs and long chain saturated and unsaturated beta-hydroxyacyl-ACPs. The polypeptide is 3-hydroxyacyl-[acyl-carrier-protein] dehydratase FabZ (Rickettsia felis (strain ATCC VR-1525 / URRWXCal2) (Rickettsia azadi)).